Consider the following 324-residue polypeptide: Tetrachlorobenzoquinone reductase (324 aa).

The 103-residue stretch at 5 to 107 folds into the FAD-binding FR-type domain; the sequence is VSTIDMTVTQ…VPPANNFALV (103 aa). Positions 238-324 constitute a 2Fe-2S ferredoxin-type domain; it reads FTVVLARRSG…SKSPRLVLDI (87 aa). 4 residues coordinate [2Fe-2S] cluster: Cys273, Cys278, Cys281, and Cys311.

This sequence belongs to the PDR/VanB family. As to quaternary structure, homotrimer. FMN is required as a cofactor. The cofactor is [2Fe-2S] cluster.

The catalysed reaction is 2,3,5,6-tetrachlorohydroquinone + NAD(+) + H(+) = 2,3,5,6-tetrachloro-1,4-benzoquinone + NADH. It participates in xenobiotic degradation; pentachlorophenol degradation. With respect to regulation, in vitro, activated by tetrachlorohydroquinone (TCHQ) at low concentrations and inhibited at high concentrations (above 200 uM). However, PcpD would only be stimulated by tetrachlorohydroquinone (TCHQ) under in vivo conditions due to the toxicity of tetrachlorohydroquinone (TCHQ). Competitively inhibited by pentachlorophenol (PCP) in a concentration-dependent manner. PcpD is regulated by tetrachlorohydroquinone (TCHQ) and pentachlorophenol (PCP) using a mechanism, which maintains tetrachlorobenzoquinone at a level that would neither significantly decrease the biodegradation of pentachlorophenol (PCP) nor cause cytotoxicity in cells. Its function is as follows. Involved in the degradation of the xenobiocide pentachlorophenol (PCP). Catalyzes the reduction of tetrachlorobenzoquinone (TCBQ) to yield tetrachlorohydroquinone (TCHQ). Also able to reduce 2,6-dichloroindophenol (DCIP). This Sphingobium chlorophenolicum protein is Tetrachlorobenzoquinone reductase.